We begin with the raw amino-acid sequence, 259 residues long: UPF0246 protein NMCC_0856 (259 aa).

The protein belongs to the UPF0246 family.

The sequence is that of UPF0246 protein NMCC_0856 from Neisseria meningitidis serogroup C (strain 053442).